The following is a 172-amino-acid chain: 16S rRNA aminocarboxypropyltransferase (172 aa).

Residues Thr21, Leu71, Leu93, and Thr112 each contribute to the S-adenosyl-L-methionine site.

Belongs to the TDD superfamily. TSR3 family.

Its subcellular location is the cytoplasm. The catalysed reaction is an N(1)-methylpseudouridine in rRNA + S-adenosyl-L-methionine = N(1)-methyl-N(3)-[(3S)-3-amino-3-carboxypropyl]pseudouridine in rRNA + S-methyl-5'-thioadenosine + H(+). Aminocarboxypropyltransferase that catalyzes the aminocarboxypropyl transfer on pseudouridine at position 914 in 16S rRNA. It constitutes the last step in biosynthesis of the hypermodified N1-methyl-N3-(3-amino-3-carboxypropyl) pseudouridine (m1acp3-Psi). This Methanocaldococcus jannaschii (strain ATCC 43067 / DSM 2661 / JAL-1 / JCM 10045 / NBRC 100440) (Methanococcus jannaschii) protein is 16S rRNA aminocarboxypropyltransferase.